Here is a 317-residue protein sequence, read N- to C-terminus: Ribosomal RNA small subunit methyltransferase H (317 aa).

Residues 36-38, D56, F80, D102, and Q109 each bind S-adenosyl-L-methionine; that span reads GGH.

It belongs to the methyltransferase superfamily. RsmH family.

The protein localises to the cytoplasm. The catalysed reaction is cytidine(1402) in 16S rRNA + S-adenosyl-L-methionine = N(4)-methylcytidine(1402) in 16S rRNA + S-adenosyl-L-homocysteine + H(+). Specifically methylates the N4 position of cytidine in position 1402 (C1402) of 16S rRNA. The chain is Ribosomal RNA small subunit methyltransferase H from Baumannia cicadellinicola subsp. Homalodisca coagulata.